An 817-amino-acid chain; its full sequence is MAMRSWTPDQGFVDRKLVRPASVSTSLSLELCTFPSTLGSSVAANALEQLLVVEKSLQGDYFTCNEEVKTFLKDITVAVKKLEEMRKNTIELLEIESMELSRLYFLLETVPNSMHKELQECILEARRLNILEISQVKGKIEKTNDEIKFLNDKIIELKNMNEALGIKQVELAKQHAKFVLLLNQTLEEKAVATICINDTYTRIKFEKEEIGLQKQCLQDATDLIEKHKQEHRKKKERLAERIKDVKQSCEEKRKEAYNKRKELTRLQNKIIKMKQTVTTNAVMINDKSLEIMRLRETADLWKKKVEDMKRVCESLEEKLLFFLTHKQQIDSVSSEKKSGFISQIQQVAEKLQKINKENKDLRDRLNTLLKQYKITLKEEEAMSLQRQKMAEEHQKQMELLNQKETFLTQRKLDIKNMEEGFSTLRDLNVATKEVYRKQIKLLTENLERELQRWVVNQWRLLCSRKRHSRWLHKTKLTLRKIITEIEIAEEKRRQLLKETKRRQKEISRFVNQIETIKEQLEVEEKEYIKKEKKLMKELNKYEDLIIKEAQINKVKEEQLVETLPRLQIAEDDFQEKSRTLKSLQNDISAKKQEETLLSTYIFRYRKDIIRCTNNTETVKRDMRHIRTLESEKTQSHFEALKNLENEIYVNDQKLALLILENKKLRDYLAYLKKHTKEYSEKQIVTVQNSGDLSWQLIAQHSQYSDLLAEFQIKIKELVDTGEETLQEIRSLASKLRYRDEKIESISAWLLGGIERLHSLMEEESPSSLSKEDLQKAGMKQKEEKTLRFSPSLHTRRDTLSRNCKMIKKRSRSPKNKP.

Coiled coils occupy residues 130-166 (ILEI…ALGI) and 217-594 (LQDA…KQEE). A disordered region spans residues 761–817 (EEESPSSLSKEDLQKAGMKQKEEKTLRFSPSLHTRRDTLSRNCKMIKKRSRSPKNKP). Basic and acidic residues predominate over residues 769-786 (SKEDLQKAGMKQKEEKTL). Positions 804–817 (KMIKKRSRSPKNKP) are enriched in basic residues.

In Rattus norvegicus (Rat), this protein is Coiled-coil domain-containing protein 175 (Ccdc175).